A 503-amino-acid polypeptide reads, in one-letter code: ATP synthase subunit alpha (503 aa).

Residue 170-177 (GDRATGKT) coordinates ATP.

The protein belongs to the ATPase alpha/beta chains family. In terms of assembly, F-type ATPases have 2 components, CF(1) - the catalytic core - and CF(0) - the membrane proton channel. CF(1) has five subunits: alpha(3), beta(3), gamma(1), delta(1), epsilon(1). CF(0) has three main subunits: a(1), b(2) and c(9-12). The alpha and beta chains form an alternating ring which encloses part of the gamma chain. CF(1) is attached to CF(0) by a central stalk formed by the gamma and epsilon chains, while a peripheral stalk is formed by the delta and b chains.

The protein localises to the cell inner membrane. It catalyses the reaction ATP + H2O + 4 H(+)(in) = ADP + phosphate + 5 H(+)(out). Its function is as follows. Produces ATP from ADP in the presence of a proton gradient across the membrane. The alpha chain is a regulatory subunit. This is ATP synthase subunit alpha from Aquifex aeolicus (strain VF5).